The chain runs to 452 residues: Bifunctional protein GlmU (452 aa).

Residues 1–224 (MNIVILAAGQ…EWEVLGVNSK (224 aa)) form a pyrophosphorylase region. UDP-N-acetyl-alpha-D-glucosamine is bound by residues 6–9 (LAAG), Lys20, Gln71, 76–77 (GT), 98–100 (YGD), Gly134, Glu149, Asn164, and Asn222. Asp100 provides a ligand contact to Mg(2+). Asn222 provides a ligand contact to Mg(2+). Residues 225–245 (VQLAELERQHQLNLAGELLVA) are linker. The tract at residues 246–452 (GVRLADPARI…GWERPKKVKK (207 aa)) is N-acetyltransferase. UDP-N-acetyl-alpha-D-glucosamine-binding residues include Arg328 and Lys346. Catalysis depends on His358, which acts as the Proton acceptor. 2 residues coordinate UDP-N-acetyl-alpha-D-glucosamine: Tyr361 and Asn372. Residues Ala375, 381–382 (NY), Ser400, Ala418, and Arg435 each bind acetyl-CoA.

In the N-terminal section; belongs to the N-acetylglucosamine-1-phosphate uridyltransferase family. The protein in the C-terminal section; belongs to the transferase hexapeptide repeat family. As to quaternary structure, homotrimer. Mg(2+) is required as a cofactor.

It is found in the cytoplasm. The enzyme catalyses alpha-D-glucosamine 1-phosphate + acetyl-CoA = N-acetyl-alpha-D-glucosamine 1-phosphate + CoA + H(+). The catalysed reaction is N-acetyl-alpha-D-glucosamine 1-phosphate + UTP + H(+) = UDP-N-acetyl-alpha-D-glucosamine + diphosphate. The protein operates within nucleotide-sugar biosynthesis; UDP-N-acetyl-alpha-D-glucosamine biosynthesis; N-acetyl-alpha-D-glucosamine 1-phosphate from alpha-D-glucosamine 6-phosphate (route II): step 2/2. Its pathway is nucleotide-sugar biosynthesis; UDP-N-acetyl-alpha-D-glucosamine biosynthesis; UDP-N-acetyl-alpha-D-glucosamine from N-acetyl-alpha-D-glucosamine 1-phosphate: step 1/1. It functions in the pathway bacterial outer membrane biogenesis; LPS lipid A biosynthesis. Catalyzes the last two sequential reactions in the de novo biosynthetic pathway for UDP-N-acetylglucosamine (UDP-GlcNAc). The C-terminal domain catalyzes the transfer of acetyl group from acetyl coenzyme A to glucosamine-1-phosphate (GlcN-1-P) to produce N-acetylglucosamine-1-phosphate (GlcNAc-1-P), which is converted into UDP-GlcNAc by the transfer of uridine 5-monophosphate (from uridine 5-triphosphate), a reaction catalyzed by the N-terminal domain. This is Bifunctional protein GlmU from Dechloromonas aromatica (strain RCB).